The following is a 333-amino-acid chain: tRNA-modifying protein YgfZ (333 aa).

Tryptophan 33 and tryptophan 195 together coordinate folate.

The protein belongs to the tRNA-modifying YgfZ family.

The protein resides in the cytoplasm. Its function is as follows. Folate-binding protein involved in regulating the level of ATP-DnaA and in the modification of some tRNAs. It is probably a key factor in regulatory networks that act via tRNA modification, such as initiation of chromosomal replication. The chain is tRNA-modifying protein YgfZ from Pectobacterium carotovorum subsp. carotovorum (strain PC1).